Reading from the N-terminus, the 199-residue chain is dITP/XTP pyrophosphatase (199 aa).

Ser8–Lys13 contacts substrate. Asp69 functions as the Proton acceptor in the catalytic mechanism. Asp69 contributes to the Mg(2+) binding site. Residues Ser70, Phe154–Asn157, Lys177, and His182–Arg183 each bind substrate.

This sequence belongs to the HAM1 NTPase family. Homodimer. The cofactor is Mg(2+).

The catalysed reaction is XTP + H2O = XMP + diphosphate + H(+). The enzyme catalyses dITP + H2O = dIMP + diphosphate + H(+). It carries out the reaction ITP + H2O = IMP + diphosphate + H(+). Pyrophosphatase that catalyzes the hydrolysis of nucleoside triphosphates to their monophosphate derivatives, with a high preference for the non-canonical purine nucleotides XTP (xanthosine triphosphate), dITP (deoxyinosine triphosphate) and ITP. Seems to function as a house-cleaning enzyme that removes non-canonical purine nucleotides from the nucleotide pool, thus preventing their incorporation into DNA/RNA and avoiding chromosomal lesions. This is dITP/XTP pyrophosphatase from Xanthomonas axonopodis pv. citri (strain 306).